We begin with the raw amino-acid sequence, 151 residues long: uncharacterized protein (151 aa).

This is an uncharacterized protein from Rhizobium meliloti (strain 1021) (Ensifer meliloti).